The chain runs to 103 residues: Large ribosomal subunit protein bL21 (103 aa).

It belongs to the bacterial ribosomal protein bL21 family. As to quaternary structure, part of the 50S ribosomal subunit. Contacts protein L20.

Functionally, this protein binds to 23S rRNA in the presence of protein L20. This chain is Large ribosomal subunit protein bL21, found in Acinetobacter baylyi (strain ATCC 33305 / BD413 / ADP1).